The primary structure comprises 46 residues: Amine oxidase [flavin-containing] A (46 aa).

It belongs to the flavin monoamine oxidase family. Monomer, homo- or heterodimer (containing two subunits of similar size). Each subunit contains a covalently bound flavin. Enzymatically active as monomer. FAD is required as a cofactor.

It localises to the mitochondrion outer membrane. It carries out the reaction a secondary aliphatic amine + O2 + H2O = a primary amine + an aldehyde + H2O2. It catalyses the reaction a primary methyl amine + O2 + H2O = an aldehyde + H2O2 + NH4(+). The catalysed reaction is (R)-adrenaline + O2 + H2O = (R)-3,4-dihydroxymandelaldehyde + methylamine + H2O2. The enzyme catalyses dopamine + O2 + H2O = 3,4-dihydroxyphenylacetaldehyde + H2O2 + NH4(+). It carries out the reaction tyramine + O2 + H2O = (4-hydroxyphenyl)acetaldehyde + H2O2 + NH4(+). It catalyses the reaction (R)-noradrenaline + O2 + H2O = (R)-3,4-dihydroxymandelaldehyde + H2O2 + NH4(+). The catalysed reaction is serotonin + O2 + H2O = (5-hydroxyindol-3-yl)acetaldehyde + H2O2 + NH4(+). The enzyme catalyses kynuramine + O2 + H2O = 3-(2-aminophenyl)-3-oxopropanal + H2O2 + NH4(+). It carries out the reaction tryptamine + O2 + H2O = indole-3-acetaldehyde + H2O2 + NH4(+). It catalyses the reaction 2-phenylethylamine + O2 + H2O = 2-phenylacetaldehyde + H2O2 + NH4(+). Catalyzes the oxidative deamination of primary and some secondary amine such as neurotransmitters, with concomitant reduction of oxygen to hydrogen peroxide and has important functions in the metabolism of neuroactive and vasoactive amines in the central nervous system and peripheral tissues. Preferentially oxidizes serotonin. Also catalyzes the oxidative deamination of kynuramine to 3-(2-aminophenyl)-3-oxopropanal that can spontaneously condense to 4-hydroxyquinoline. This chain is Amine oxidase [flavin-containing] A, found in Ovis aries (Sheep).